A 254-amino-acid polypeptide reads, in one-letter code: Capsid protein (254 aa).

Polar residues predominate over residues 1–12 (MRKYTRNTYTMS). The tract at residues 1-38 (MRKYTRNTYTMSQKRKVNPQSAWPKKRRTSTTSRKYQW) is disordered. The short motif at 10–35 (TMSQKRKVNPQSAWPKKRRTSTTSRK) is the Bipartite nuclear localization signal element.

Belongs to the geminiviridae capsid protein family. In terms of assembly, homomultimer. Binds to single-stranded and double-stranded viral DNA. Interacts (via nuclear localization signal) with host importin alpha-1a.

The protein localises to the virion. The protein resides in the host nucleus. Functionally, encapsidates the viral genome into characteristic twinned ('geminate') particles. Binds the genomic viral ssDNA and shuttles it into and out of the cell nucleus. Plays a role in protection of the genome from degradation, virus acquisition and transmission by insect vectors, infectivity, and systemic movement. The CP of monopartite geminiviruses is absolutely essential for virus movement. This chain is Capsid protein, found in Beet curly top virus (strain California/Logan) (BCTV).